The chain runs to 100 residues: Urease subunit gamma (100 aa).

The protein belongs to the urease gamma subunit family. As to quaternary structure, heterotrimer of UreA (gamma), UreB (beta) and UreC (alpha) subunits. Three heterotrimers associate to form the active enzyme.

It is found in the cytoplasm. It carries out the reaction urea + 2 H2O + H(+) = hydrogencarbonate + 2 NH4(+). The protein operates within nitrogen metabolism; urea degradation; CO(2) and NH(3) from urea (urease route): step 1/1. The protein is Urease subunit gamma of Mycobacterium sp. (strain JLS).